The primary structure comprises 802 residues: Leucine--tRNA ligase (802 aa).

Positions P40–H51 match the 'HIGH' region motif. The 'KMSKS' region signature appears at K576–S580. K579 serves as a coordination point for ATP.

This sequence belongs to the class-I aminoacyl-tRNA synthetase family.

The protein localises to the cytoplasm. It catalyses the reaction tRNA(Leu) + L-leucine + ATP = L-leucyl-tRNA(Leu) + AMP + diphosphate. The sequence is that of Leucine--tRNA ligase from Bacillus cereus (strain B4264).